The sequence spans 452 residues: Tol-Pal system protein TolB (452 aa).

Residues 1 to 31 (MCGVRRGMGVLLLFCAVALCAMPFVVRSVWG) form the signal peptide.

This sequence belongs to the TolB family. In terms of assembly, the Tol-Pal system is composed of five core proteins: the inner membrane proteins TolA, TolQ and TolR, the periplasmic protein TolB and the outer membrane protein Pal. They form a network linking the inner and outer membranes and the peptidoglycan layer.

The protein localises to the periplasm. Its function is as follows. Part of the Tol-Pal system, which plays a role in outer membrane invagination during cell division and is important for maintaining outer membrane integrity. This is Tol-Pal system protein TolB from Syntrophus aciditrophicus (strain SB).